A 436-amino-acid chain; its full sequence is Glutamyl-tRNA reductase (436 aa).

Substrate-binding positions include 49-52, Ser-118, 123-125, and Gln-129; these read TCNR and EPQ. Cys-50 serves as the catalytic Nucleophile. 203–208 contacts NADP(+); it reads GAGETI.

This sequence belongs to the glutamyl-tRNA reductase family. In terms of assembly, homodimer.

The catalysed reaction is (S)-4-amino-5-oxopentanoate + tRNA(Glu) + NADP(+) = L-glutamyl-tRNA(Glu) + NADPH + H(+). Its pathway is porphyrin-containing compound metabolism; protoporphyrin-IX biosynthesis; 5-aminolevulinate from L-glutamyl-tRNA(Glu): step 1/2. In terms of biological role, catalyzes the NADPH-dependent reduction of glutamyl-tRNA(Glu) to glutamate 1-semialdehyde (GSA). In Actinobacillus pleuropneumoniae serotype 7 (strain AP76), this protein is Glutamyl-tRNA reductase.